The chain runs to 310 residues: Putative S-adenosyl-L-methionine-dependent methyltransferase MUL_4762 (310 aa).

S-adenosyl-L-methionine contacts are provided by residues D132 and 161-162; that span reads DL.

This sequence belongs to the UPF0677 family.

Functionally, exhibits S-adenosyl-L-methionine-dependent methyltransferase activity. In Mycobacterium ulcerans (strain Agy99), this protein is Putative S-adenosyl-L-methionine-dependent methyltransferase MUL_4762.